Reading from the N-terminus, the 122-residue chain is Large ribosomal subunit protein uL14 (122 aa).

The protein belongs to the universal ribosomal protein uL14 family. As to quaternary structure, part of the 50S ribosomal subunit. Forms a cluster with proteins L3 and L19. In the 70S ribosome, L14 and L19 interact and together make contacts with the 16S rRNA in bridges B5 and B8.

Binds to 23S rRNA. Forms part of two intersubunit bridges in the 70S ribosome. The polypeptide is Large ribosomal subunit protein uL14 (Helicobacter hepaticus (strain ATCC 51449 / 3B1)).